A 377-amino-acid polypeptide reads, in one-letter code: ATP phosphoribosyltransferase regulatory subunit (377 aa).

Belongs to the class-II aminoacyl-tRNA synthetase family. HisZ subfamily. As to quaternary structure, heteromultimer composed of HisG and HisZ subunits.

Its subcellular location is the cytoplasm. It participates in amino-acid biosynthesis; L-histidine biosynthesis; L-histidine from 5-phospho-alpha-D-ribose 1-diphosphate: step 1/9. Required for the first step of histidine biosynthesis. May allow the feedback regulation of ATP phosphoribosyltransferase activity by histidine. This Sinorhizobium medicae (strain WSM419) (Ensifer medicae) protein is ATP phosphoribosyltransferase regulatory subunit.